A 335-amino-acid chain; its full sequence is Glycerol-3-phosphate dehydrogenase [NAD(P)+] (335 aa).

NADPH is bound by residues S10, F11, R31, and K105. Residues K105, G136, and S138 each contribute to the sn-glycerol 3-phosphate site. A140 contacts NADPH. Residues K191, D244, S254, R255, and N256 each coordinate sn-glycerol 3-phosphate. K191 (proton acceptor) is an active-site residue. R255 is an NADPH binding site. 2 residues coordinate NADPH: V279 and E281.

Belongs to the NAD-dependent glycerol-3-phosphate dehydrogenase family.

Its subcellular location is the cytoplasm. The enzyme catalyses sn-glycerol 3-phosphate + NAD(+) = dihydroxyacetone phosphate + NADH + H(+). The catalysed reaction is sn-glycerol 3-phosphate + NADP(+) = dihydroxyacetone phosphate + NADPH + H(+). It participates in membrane lipid metabolism; glycerophospholipid metabolism. Catalyzes the reduction of the glycolytic intermediate dihydroxyacetone phosphate (DHAP) to sn-glycerol 3-phosphate (G3P), the key precursor for phospholipid synthesis. The protein is Glycerol-3-phosphate dehydrogenase [NAD(P)+] of Leptospira interrogans serogroup Icterohaemorrhagiae serovar copenhageni (strain Fiocruz L1-130).